Consider the following 343-residue polypeptide: tRNA N6-adenosine threonylcarbamoyltransferase (343 aa).

H116 and H120 together coordinate Fe cation. Substrate contacts are provided by residues 138–142 (LVSGG), D172, G185, D189, and N277. A Fe cation-binding site is contributed by D305.

This sequence belongs to the KAE1 / TsaD family. Fe(2+) serves as cofactor.

It is found in the cytoplasm. The enzyme catalyses L-threonylcarbamoyladenylate + adenosine(37) in tRNA = N(6)-L-threonylcarbamoyladenosine(37) in tRNA + AMP + H(+). In terms of biological role, required for the formation of a threonylcarbamoyl group on adenosine at position 37 (t(6)A37) in tRNAs that read codons beginning with adenine. Is involved in the transfer of the threonylcarbamoyl moiety of threonylcarbamoyl-AMP (TC-AMP) to the N6 group of A37, together with TsaE and TsaB. TsaD likely plays a direct catalytic role in this reaction. The polypeptide is tRNA N6-adenosine threonylcarbamoyltransferase (Mycobacterium ulcerans (strain Agy99)).